The following is a 543-amino-acid chain: Protein male-specific lethal-3 (543 aa).

A Chromo domain is found at 10–90 (LFNRGEKVLC…KLQRELAEAA (81 aa)). The disordered stretch occupies residues 93-247 (QKTGGYSYKD…THTTDAEKRI (155 aa)). Composition is skewed to basic and acidic residues over residues 180–202 (RSRDGSGNRSRDGSGNRSRDNSS), 210–224 (KSKGGDKNDDGERRS), and 234–247 (SPKDTHTTDAEKRI). One can recognise an MRG domain in the interval 249-542 (QEDRVMLRIS…PLIDQGRELS (294 aa)).

In terms of assembly, component of the male-specific lethal (MSL) histone acetyltransferase complex, composed of mof, mle, msl-1, msl-2 and msl-3 proteins, as well as roX1 and roX2 non-coding RNAs. Ubiquitinated by msl-2.

Its subcellular location is the nucleus. It localises to the chromosome. Functionally, component of the male-specific lethal (MSL) histone acetyltransferase complex, a multiprotein complex essential for elevating transcription of the single X chromosome in the male (X chromosome dosage compensation). The MSL complex specifically associates with the single X chromosome in males and mediates formation of H4K16ac, promoting a two-fold activation of X chromosome. Acts as a histone reader that specifically recognizes and binds histone H3 trimethylated at 'Lys-36' (H3K36me3) and histone H4 monomethylated at 'Lys-20' (H4K20me1). Within the MSL complex, mediates the spreading of the MSL complex from initiation sites on the male X chromosome to flanking chromatin. Following initial recruitment of the MSL complex to male X chromosome by msl-2, msl-3 binds H3K36me3 and promotes spreading of the MSL complex in cis. In addition to its role in dosage compensation in males, promotes germline stem cell differentiation in females: recognizes and binds H3K36me3, promoting recruitment of the ATAC complex and transcription of genes, such as RpS19b. The chain is Protein male-specific lethal-3 (msl-3) from Drosophila virilis (Fruit fly).